The sequence spans 137 residues: Large ribosomal subunit protein uL16 (137 aa).

Belongs to the universal ribosomal protein uL16 family. As to quaternary structure, part of the 50S ribosomal subunit.

Its function is as follows. Binds 23S rRNA and is also seen to make contacts with the A and possibly P site tRNAs. This is Large ribosomal subunit protein uL16 from Acinetobacter baylyi (strain ATCC 33305 / BD413 / ADP1).